The chain runs to 98 residues: NADH-ubiquinone oxidoreductase chain 4L (98 aa).

3 consecutive transmembrane segments (helical) span residues 1-21 (MSMV…GLLM), 29-49 (SLLC…LTIL), and 61-81 (IILL…LVMV).

The protein belongs to the complex I subunit 4L family. In terms of assembly, core subunit of respiratory chain NADH dehydrogenase (Complex I) which is composed of 45 different subunits.

The protein resides in the mitochondrion inner membrane. The enzyme catalyses a ubiquinone + NADH + 5 H(+)(in) = a ubiquinol + NAD(+) + 4 H(+)(out). Its function is as follows. Core subunit of the mitochondrial membrane respiratory chain NADH dehydrogenase (Complex I) which catalyzes electron transfer from NADH through the respiratory chain, using ubiquinone as an electron acceptor. Part of the enzyme membrane arm which is embedded in the lipid bilayer and involved in proton translocation. In Bos mutus grunniens (Wild yak), this protein is NADH-ubiquinone oxidoreductase chain 4L (MT-ND4L).